The primary structure comprises 186 residues: Elongation factor P (186 aa).

Belongs to the elongation factor P family.

The protein resides in the cytoplasm. It participates in protein biosynthesis; polypeptide chain elongation. Functionally, involved in peptide bond synthesis. Stimulates efficient translation and peptide-bond synthesis on native or reconstituted 70S ribosomes in vitro. Probably functions indirectly by altering the affinity of the ribosome for aminoacyl-tRNA, thus increasing their reactivity as acceptors for peptidyl transferase. The protein is Elongation factor P of Synechococcus sp. (strain RCC307).